The primary structure comprises 144 residues: Prefoldin subunit alpha (144 aa).

The protein belongs to the prefoldin alpha subunit family. In terms of assembly, heterohexamer of two alpha and four beta subunits.

It is found in the cytoplasm. Molecular chaperone capable of stabilizing a range of proteins. Seems to fulfill an ATP-independent, HSP70-like function in archaeal de novo protein folding. The polypeptide is Prefoldin subunit alpha (Methanococcus maripaludis (strain C7 / ATCC BAA-1331)).